A 70-amino-acid chain; its full sequence is MAHPKAAEVRKLTDADITEQIDGIRRELFDLRFQQATRQLSNTHRFKEARIKLAQLLTVQKERSRSAASS.

This sequence belongs to the universal ribosomal protein uL29 family.

The polypeptide is Large ribosomal subunit protein uL29 (Prochlorococcus marinus (strain MIT 9313)).